The sequence spans 1366 residues: MAPSRRKGGGKAAAVAAACRKRKVGDLVLAKVKGFPAWPAVVSEPEKWDASPDSKKVFVHFFGTQQIAFCNPGDVEAFTEERKQSLLTRRHAKGSDFVRAVKEIIESYEKLKQQERASDPKSAEEGTLGSAENTTLMPQVIEIPTATSLTQMNSDPSHGRDESTLLNEDASAAEQMLALRDNSGPRNKACDSAVVKEPRKIATYSSRKRNGGVRSQNCAPQNETCPVQRSKSPSRLQTEKLQSSMLQNSDGGQTIDDVEDGALRREKRIRRSSGHSESDDVATSSLNSHGSDEENASEIATVESDNNRNEGNGVDSGSKVEQIDIGGKFLEGDYDLNKGLNFQINIMVKRKKRKPTRKRGTSDVVDPQAKVEGEAVPEAGARNNVQTSQNSHEKFTERPCEENGDEHLPLVKRARVRMSRAFYGNHEANSSLQAEERSPKDTVVSATAQTSPSDIISSHDTFAVEESKFFEVSAKLSGDMVNVAPSPVEKSHDGMSPSEACVQTVREREYAMGWNELSKTPDDKSAGPQYNQVSSLPAGEAQTASVPEAVCPEVLKLLTSESDLPAVQYCQVAKIEPSMDPNTVDSSANNASEICSLSIPSQLSGQDRSNDQDACVSLENSREYLNEEGSKIDACVAQVVQSEAIEHSPSSCLVVNKQETENMPKTVNMLLKEGHGSLGEECAIVEPAQCTPNLPISATESDVIVGENVPLNEIGCTKCEDAVEDSRQLKMIGETNDQKQQVQTNNSVLVSENLSREKMSFSPAITADTPARGTPHSSSVYYHISTSESANDMQNNSSGSPNIPTGEKKNDCDAIVKEEEKIETGVCQGQKVVSCDVQSTRESYEDALCSLVRTKESIGRATCLAMDLMKFGVSAKAMEILAHTLESESNLKRRVDLFFLVDSIAQCSKGLKGDTGCVYLSAIQVILPRLLAAAVPAGATTQENRKQCLKVLKLWLERRILPESIVRHHIRELDSHSIVPACLYSRRSARTERSLDDPVRDMEDMLVDEYGSNSTLQLPGFCMPALLKDEEGGSDSEGGCDSEGGSDSDGGDFESVTPEHESRILEENVSSSTAERHTLILEDVDGELEMEDVAPPWGTENCTHTDQADNTKVSNCQLGQQHRPVFGTSHQHMSLSSPPLPSSSPPPPPAPPSQQGECAMPDSYLNGFENGGYRNVHGDQQAGPLRMNPPLSGSTMHYQGPESSYISGVQLTNSIPQADGSNFQHRPYPSHPHPHPPPPPPPPQHQFSFREPGHVLKSHRDAPSYSHRSHYVPNCDERNFHDNHERMRHAPFENRDNWRYPPSSSYGSRYQDEHKAPYPSSSYNGVRWDNPPRQYNNRPSFHPKPHSEGPAPVGMRDPGMWHQRSD.

In terms of domain architecture, PWWP spans 24–81 (VGDLVLAKVKGFPAWPAVVSEPEKWDASPDSKKVFVHFFGTQQIAFCNPGDVEAFTEE). Over residues 111–124 (LKQQERASDPKSAE) the composition is skewed to basic and acidic residues. 5 disordered regions span residues 111–138 (LKQQ…TLMP), 203–319 (TYSS…SGSK), 384–403 (NVQT…CEEN), 427–451 (EANS…AQTS), and 787–808 (SESA…TGEK). Over residues 213-252 (VRSQNCAPQNETCPVQRSKSPSRLQTEKLQSSMLQNSDGG) the composition is skewed to polar residues. Basic and acidic residues predominate over residues 391–403 (SHEKFTERPCEEN). Positions 787 to 803 (SESANDMQNNSSGSPNI) are enriched in polar residues. The region spanning 836–977 (DVQSTRESYE…HHIRELDSHS (142 aa)) is the CID domain. 2 disordered regions span residues 1027 to 1076 (LKDE…TAER) and 1128 to 1366 (TSHQ…QRSD). Positions 1032 to 1052 (GGSDSEGGCDSEGGSDSDGGD) are enriched in acidic residues. Residues 1057–1066 (TPEHESRILE) show a composition bias toward basic and acidic residues. The span at 1138 to 1152 (PPLPSSSPPPPPAPP) shows a compositional bias: pro residues. Polar residues predominate over residues 1191-1223 (LSGSTMHYQGPESSYISGVQLTNSIPQADGSNF). Over residues 1229 to 1244 (PSHPHPHPPPPPPPPQ) the composition is skewed to pro residues. Composition is skewed to basic and acidic residues over residues 1251 to 1262 (EPGHVLKSHRDA) and 1275 to 1298 (CDER…RDNW). Low complexity predominate over residues 1299 to 1309 (RYPPSSSYGSR).

Expressed throughout young primordia, and vegetative and reproductive apices.

It localises to the nucleus. Its function is as follows. Probable transcription factor that acts with partial redundancy with HULK1 and HULK3. Plays diverse and essential roles in the control of plant development, physiology and flowering time. This Arabidopsis thaliana (Mouse-ear cress) protein is Protein HUA2-LIKE 2.